Reading from the N-terminus, the 564-residue chain is Arginine--tRNA ligase (564 aa).

The short motif at 122 to 132 (PNIAKPFSIGH) is the 'HIGH' region element.

Belongs to the class-I aminoacyl-tRNA synthetase family. As to quaternary structure, monomer.

The protein resides in the cytoplasm. The catalysed reaction is tRNA(Arg) + L-arginine + ATP = L-arginyl-tRNA(Arg) + AMP + diphosphate. The protein is Arginine--tRNA ligase of Lactococcus lactis subsp. cremoris (strain SK11).